A 131-amino-acid polypeptide reads, in one-letter code: Small ribosomal subunit protein uS9 (131 aa).

Belongs to the universal ribosomal protein uS9 family.

This chain is Small ribosomal subunit protein uS9, found in Actinobacillus pleuropneumoniae serotype 7 (strain AP76).